We begin with the raw amino-acid sequence, 331 residues long: Laforin (331 aa).

Residues methionine 1–leucine 124 form the CBM20 domain. Residue serine 25 is modified to Phosphoserine; by AMPK. Substrate contacts are provided by residues tryptophan 32, lysine 87, glycine 103 to aspartate 107, aspartate 197, aspartate 235, and arginine 241. The Tyrosine-protein phosphatase domain maps to histidine 156–lysine 323. Catalysis depends on cysteine 266, which acts as the Phosphocysteine intermediate. Positions cysteine 266–arginine 272 match the Glucan phosphatase signature motif CXAGXGR motif. Substrate contacts are provided by residues asparagine 267–arginine 272 and tyrosine 304.

It belongs to the protein-tyrosine phosphatase family. Homodimer. Interacts with itself. Interacts with PPP1R3B, PPP1R3C, PPP1R3D, HIRIP5, and EPM2AIP1. Binds glycogen and Lafora bodies. Interacts with NHLRC1/malin (via the NHL repeats). Forms a complex with NHLRC1/malin and HSP70. Interacts with PPP1R3D; in the presence of NHLC1/malin the interaction leads to ubiquitination and autophagic degradation of PPP1R3D. Interacts (via the phosphatase domain) with MAPT/Tau; the interaction dephosphorylates MAPT. Interacts with PRDM8. Post-translationally, polyubiquitinated by NHLRC1/malin. In terms of processing, phosphorylation on Ser-25 by AMPK affects the phosphatase activity of the enzyme and its ability to homodimerize and interact with NHLRC1, PPP1R3C or PRKAA2. Widely expressed.

Its subcellular location is the cytoplasm. The protein localises to the endoplasmic reticulum membrane. It localises to the cell membrane. It catalyses the reaction O-phospho-L-tyrosyl-[protein] + H2O = L-tyrosyl-[protein] + phosphate. The catalysed reaction is O-phospho-L-seryl-[protein] + H2O = L-seryl-[protein] + phosphate. The enzyme catalyses O-phospho-L-threonyl-[protein] + H2O = L-threonyl-[protein] + phosphate. Its function is as follows. Plays an important role in preventing glycogen hyperphosphorylation and the formation of insoluble aggregates, via its activity as glycogen phosphatase, and by promoting the ubiquitination of proteins involved in glycogen metabolism via its interaction with the E3 ubiquitin ligase NHLRC1/malin. Dephosphorylates phosphotyrosine and synthetic substrates, such as para-nitrophenylphosphate (pNPP), and has low activity with phosphoserine and phosphothreonine substrates (in vitro). Has also been shown to dephosphorylate MAPT. Shows strong phosphatase activity towards complex carbohydrates in vitro, avoiding glycogen hyperphosphorylation which is associated with reduced branching and formation of insoluble aggregates. Forms a complex with NHLRC1/malin and HSP70, which suppresses the cellular toxicity of misfolded proteins by promoting their degradation through the ubiquitin-proteasome system (UPS). Acts as a scaffold protein to facilitate PPP1R3C/PTG ubiquitination by NHLRC1/malin. Also promotes proteasome-independent protein degradation through the macroautophagy pathway. The sequence is that of Laforin (Epm2a) from Rattus norvegicus (Rat).